Reading from the N-terminus, the 272-residue chain is 3',5'-cyclic adenosine monophosphate phosphodiesterase CpdA (272 aa).

Fe cation-binding residues include aspartate 21, histidine 23, aspartate 63, asparagine 93, histidine 161, histidine 200, and histidine 202. AMP is bound by residues histidine 23, aspartate 63, and 93–94 (NH). Position 202 (histidine 202) interacts with AMP.

The protein belongs to the cyclic nucleotide phosphodiesterase class-III family. Monomer. A divalent metal cation is required as a cofactor.

The enzyme catalyses 3',5'-cyclic AMP + H2O = AMP + H(+). With respect to regulation, activated by iron. Other divalent metal ions have no effect. In terms of biological role, hydrolyzes cAMP to 5'-AMP. Plays an important regulatory role in modulating the intracellular concentration of cAMP, thereby influencing cAMP-dependent processes. Specifically required for regulation of virulence factors. Can also hydrolyze cGMP, but cGMP is unlikely to be synthesized by P.aeruginosa and cAMP is probably the biologically relevant substrate for CpdA in vivo. The chain is 3',5'-cyclic adenosine monophosphate phosphodiesterase CpdA from Pseudomonas aeruginosa.